A 229-amino-acid chain; its full sequence is Endonuclease NucS (229 aa).

This sequence belongs to the NucS endonuclease family.

It localises to the cytoplasm. In terms of biological role, cleaves both 3' and 5' ssDNA extremities of branched DNA structures. This Corynebacterium diphtheriae (strain ATCC 700971 / NCTC 13129 / Biotype gravis) protein is Endonuclease NucS.